A 495-amino-acid polypeptide reads, in one-letter code: Lysine--tRNA ligase (495 aa).

2 residues coordinate Mg(2+): Glu-406 and Glu-413.

Belongs to the class-II aminoacyl-tRNA synthetase family. In terms of assembly, homodimer. The cofactor is Mg(2+).

It localises to the cytoplasm. The catalysed reaction is tRNA(Lys) + L-lysine + ATP = L-lysyl-tRNA(Lys) + AMP + diphosphate. The protein is Lysine--tRNA ligase of Leptospira interrogans serogroup Icterohaemorrhagiae serovar Lai (strain 56601).